Here is a 686-residue protein sequence, read N- to C-terminus: Putative pentatricopeptide repeat-containing protein At3g49142 (686 aa).

PPR repeat units lie at residues 73-103 (NSSL…IPER), 104-138 (NVII…NVRP), 139-173 (DHYT…GLSS), 174-204 (TLFV…MSRR), 205-239 (DVVS…KISH), 240-272 (DAGT…MGKK), 273-307 (SLVS…GFEP), 308-342 (DAVS…KLIP), 343-373 (NLLL…MKSR), 374-408 (DVVS…GLVP), 409-439 (DSIA…MTDH), and 445-475 (RLEH…MSME). The interval 480-555 (VWGALLGACR…NPGASNVEVN (76 aa)) is type E motif. Residues 556–586 (RIIHTFLVGDRSHPQSDEIYRELDVLVKKMK) form a type E(+) motif region. The type DYW motif stretch occupies residues 587 to 686 (ELGYVPDSES…FGVCSCGDYW (100 aa)).

This sequence belongs to the PPR family. PCMP-H subfamily.

This Arabidopsis thaliana (Mouse-ear cress) protein is Putative pentatricopeptide repeat-containing protein At3g49142 (PCMP-H77).